The chain runs to 565 residues: Carboxylesterase 1D (565 aa).

The signal sequence occupies residues 1-18; sequence MGLYPLIWLSLAACTAWG. Residue asparagine 79 is glycosylated (N-linked (GlcNAc...) asparagine). Cysteine 87 and cysteine 116 are disulfide-bonded. The active-site Acyl-ester intermediate is the serine 221. Cysteine 273 and cysteine 284 are oxidised to a cystine. Glutamate 353 serves as the catalytic Charge relay system. Residue lysine 382 is modified to N6-succinyllysine. Histidine 466 functions as the Charge relay system in the catalytic mechanism. N-linked (GlcNAc...) asparagine glycosylation is present at asparagine 489. The Prevents secretion from ER signature appears at 562–565; the sequence is HVEL.

This sequence belongs to the type-B carboxylesterase/lipase family. As to quaternary structure, homotrimer. As to expression, highest expression occurs in liver with lower levels in adipose tissue, kidney, heart, intestine, lung, testis and thymus.

It is found in the endoplasmic reticulum lumen. It localises to the cytoplasm. Its subcellular location is the cytosol. The protein localises to the lipid droplet. The protein resides in the microsome. The enzyme catalyses a carboxylic ester + H2O = an alcohol + a carboxylate + H(+). It catalyses the reaction a long-chain fatty acyl ethyl ester + H2O = a long-chain fatty acid + ethanol + H(+). It carries out the reaction all-trans-retinyl hexadecanoate + H2O = all-trans-retinol + hexadecanoate + H(+). Its function is as follows. Major lipase in white adipose tissue. Involved in the metabolism of xenobiotics and of natural substrates. Hydrolyzes triacylglycerols and monoacylglycerols, with a preference for monoacylglycerols. The susceptibility of the substrate increases with decreasing acyl chain length of the fatty acid moiety. Catalyzes the synthesis of fatty acid ethyl esters. Hydrolyzes retinyl esters. In Mus musculus (Mouse), this protein is Carboxylesterase 1D.